The following is a 521-amino-acid chain: Cytokinin dehydrogenase 9 (521 aa).

A signal peptide spans 1–22 (MRPSLLQYLKLLLLLALGGVTT). Residue Asn-57 is glycosylated (N-linked (GlcNAc...) asparagine). Positions 59-237 (SSFPPVAVLH…TRARIPLEPA (179 aa)) constitute an FAD-binding PCMH-type domain. The FAD site is built by Ala-95, Gly-97, and Gly-99. Position 100 is a pros-8alpha-FAD histidine (His-100). FAD is bound by residues Ser-101, Gln-105, Asp-161, Thr-166, Ser-172, Val-176, and Ile-227. Asn-278, Asn-412, and Asn-418 each carry an N-linked (GlcNAc...) asparagine glycan. Residue Tyr-469 participates in FAD binding. The N-linked (GlcNAc...) asparagine glycan is linked to Asn-472. Gln-507 provides a ligand contact to FAD.

The protein belongs to the oxygen-dependent FAD-linked oxidoreductase family. Monomer. Requires FAD as cofactor. Expressed in inflorescence meristems.

The protein resides in the secreted. The protein localises to the extracellular space. Its subcellular location is the cytoplasm. It is found in the cytosol. It localises to the nucleus. The enzyme catalyses N(6)-dimethylallyladenine + A + H2O = 3-methyl-2-butenal + adenine + AH2. Its function is as follows. Catalyzes the oxidation of cytokinins, a family of N(6)-substituted adenine derivatives that are plant hormones, where the substituent is an isopentenyl group. Possesses cytokinin oxidase activity toward trans-zeatin (tZ) and N6-(2-isopentenyl)adenine (2iP) in vitro. Functions as a primary strigolactone-responsive gene to regulate rice tillering, plant height, and panicle size, likely via a secondary response gene, RR5, which encodes a cytokinin-inducible rice type-A response regulator that seems to act as negative regulator of the cytokinin signaling. This is Cytokinin dehydrogenase 9 from Oryza sativa subsp. japonica (Rice).